The chain runs to 267 residues: GTP cyclohydrolase FolE2 (267 aa).

The protein belongs to the GTP cyclohydrolase IV family.

It catalyses the reaction GTP + H2O = 7,8-dihydroneopterin 3'-triphosphate + formate + H(+). It functions in the pathway cofactor biosynthesis; 7,8-dihydroneopterin triphosphate biosynthesis; 7,8-dihydroneopterin triphosphate from GTP: step 1/1. In terms of biological role, converts GTP to 7,8-dihydroneopterin triphosphate. This chain is GTP cyclohydrolase FolE2, found in Nitrosococcus oceani (strain ATCC 19707 / BCRC 17464 / JCM 30415 / NCIMB 11848 / C-107).